The sequence spans 231 residues: Flagellar L-ring protein (231 aa).

Residues 1 to 18 form the signal peptide; the sequence is MNRLLSVFALGGAVLLAG. A lipid anchor (N-palmitoyl cysteine) is attached at Cys-19. Residue Cys-19 is the site of S-diacylglycerol cysteine attachment.

Belongs to the FlgH family. In terms of assembly, the basal body constitutes a major portion of the flagellar organelle and consists of four rings (L,P,S, and M) mounted on a central rod.

Its subcellular location is the cell outer membrane. The protein resides in the bacterial flagellum basal body. In terms of biological role, assembles around the rod to form the L-ring and probably protects the motor/basal body from shearing forces during rotation. The protein is Flagellar L-ring protein of Pseudomonas putida (strain GB-1).